Reading from the N-terminus, the 156-residue chain is ATP synthase subunit b (156 aa).

The chain crosses the membrane as a helical span at residues 7-26; that stretch reads FIGQMVAFAIFIYLTYRYVW.

The protein belongs to the ATPase B chain family. In terms of assembly, F-type ATPases have 2 components, F(1) - the catalytic core - and F(0) - the membrane proton channel. F(1) has five subunits: alpha(3), beta(3), gamma(1), delta(1), epsilon(1). F(0) has three main subunits: a(1), b(2) and c(10-14). The alpha and beta chains form an alternating ring which encloses part of the gamma chain. F(1) is attached to F(0) by a central stalk formed by the gamma and epsilon chains, while a peripheral stalk is formed by the delta and b chains.

The protein resides in the cell inner membrane. In terms of biological role, f(1)F(0) ATP synthase produces ATP from ADP in the presence of a proton or sodium gradient. F-type ATPases consist of two structural domains, F(1) containing the extramembraneous catalytic core and F(0) containing the membrane proton channel, linked together by a central stalk and a peripheral stalk. During catalysis, ATP synthesis in the catalytic domain of F(1) is coupled via a rotary mechanism of the central stalk subunits to proton translocation. Its function is as follows. Component of the F(0) channel, it forms part of the peripheral stalk, linking F(1) to F(0). This chain is ATP synthase subunit b, found in Cellvibrio japonicus (strain Ueda107) (Pseudomonas fluorescens subsp. cellulosa).